The chain runs to 107 residues: Ferredoxin 1 (107 aa).

4Fe-4S ferredoxin-type domains lie at 2 to 30 and 31 to 60; these read TFVV…YEGP and NFLV…SEDE. 2 residues coordinate [3Fe-4S] cluster: Cys9 and Cys17. [4Fe-4S] cluster is bound by residues Cys21, Cys40, Cys43, and Cys46. Cys50 is a binding site for [3Fe-4S] cluster.

Requires [4Fe-4S] cluster as cofactor. The cofactor is [3Fe-4S] cluster.

Its function is as follows. Ferredoxins are iron-sulfur proteins that transfer electrons in a wide variety of metabolic reactions. The sequence is that of Ferredoxin 1 from Stutzerimonas stutzeri (Pseudomonas stutzeri).